Consider the following 408-residue polypeptide: UDP-N-acetylglucosamine--dolichyl-phosphate N-acetylglucosaminephosphotransferase (408 aa).

Over 1–10 (MWAFPELPLP) the chain is Lumenal. A helical membrane pass occupies residues 11–38 (LLVNLFGSLLGFVATVTLIPAFRSHFIA). Over 39–58 (ARLCGQDLNKLSRQQIPESQ) the chain is Cytoplasmic. Residues 44–46 (QDL) and glutamate 56 each bind UDP-N-acetyl-alpha-D-glucosamine. A helical transmembrane segment spans residues 59–78 (GVICGAVFLIILFCFIPFPF). The Lumenal segment spans residues 79-91 (LNCFVEEQCKAFP). Residues 92–118 (HHEFVALIGALLAICCMIFLGFADDVL) traverse the membrane as a helical segment. The Cytoplasmic portion of the chain corresponds to 119 to 121 (NLR). The chain crosses the membrane as a helical span at residues 122 to 143 (WRHKLLLPTAASLPLLMVYFTN). A dolichyl phosphate-binding site is contributed by lysine 125. The Lumenal segment spans residues 144–166 (FGNTTIVVPKPFRWILGLHLDLG). Asparagine 146 carries N-linked (GlcNAc...) asparagine glycosylation. Residues 167 to 186 (ILYYVYMGLLAVFCTNAINI) traverse the membrane as a helical segment. 178 to 186 (VFCTNAINI) provides a ligand contact to dolichyl phosphate. Residue asparagine 185 coordinates Mg(2+). Over 187–192 (LAGING) the chain is Cytoplasmic. Asparagine 191 lines the UDP-N-acetyl-alpha-D-glucosamine pocket. A helical membrane pass occupies residues 193–213 (LEAGQSLVISASIIVFNLVEL). The Lumenal segment spans residues 214-218 (EGDYR). A helical transmembrane segment spans residues 219–242 (DDHVFSLYFMIPFFFTTLGLLYHN). Residues 243 to 250 (WYPSQVFV) are Cytoplasmic-facing. The helical transmembrane segment at 251–269 (GDTFCYFAGMTFAVVGILG) threads the bilayer. Residue aspartate 252 participates in Mg(2+) binding. Over 270 to 271 (HF) the chain is Lumenal. A helical transmembrane segment spans residues 272–293 (SKTMLLFFIPQVFNFLYSLPQL). The Cytoplasmic portion of the chain corresponds to 294-375 (LHAIPCPRHR…LLLKIFGPIH (82 aa)). Residue 301 to 303 (RHR) participates in UDP-N-acetyl-alpha-D-glucosamine binding. A helical transmembrane segment spans residues 376 to 400 (ERNLTLLLLLLQILSSAVTFSIRYQ). The Lumenal segment spans residues 401-408 (LVRLFYDV).

The protein belongs to the glycosyltransferase 4 family. As to quaternary structure, homodimer. Mg(2+) is required as a cofactor.

Its subcellular location is the endoplasmic reticulum membrane. The catalysed reaction is a di-trans,poly-cis-dolichyl phosphate + UDP-N-acetyl-alpha-D-glucosamine = an N-acetyl-alpha-D-glucosaminyl-diphospho-di-trans,poly-cis-dolichol + UMP. It functions in the pathway protein modification; protein glycosylation. With respect to regulation, inhibited by natural nucleoside antibiotic tunicamycin, which acts as a structural analog and competitor of UDP-GlcNAc. UDP-N-acetylglucosamine--dolichyl-phosphate N-acetylglucosaminephosphotransferase that operates in the biosynthetic pathway of dolichol-linked oligosaccharides, the glycan precursors employed in protein asparagine (N)-glycosylation. The assembly of dolichol-linked oligosaccharides begins on the cytosolic side of the endoplasmic reticulum membrane and finishes in its lumen. The sequential addition of sugars to dolichol pyrophosphate produces dolichol-linked oligosaccharides containing fourteen sugars, including two GlcNAcs, nine mannoses and three glucoses. Once assembled, the oligosaccharide is transferred from the lipid to nascent proteins by oligosaccharyltransferases. Catalyzes the initial step of dolichol-linked oligosaccharide biosynthesis, transfering GlcNAc-1-P from cytosolic UDP-GlcNAc onto the carrier lipid dolichyl phosphate (P-dolichol), yielding GlcNAc-P-P-dolichol embedded in the cytoplasmic leaflet of the endoplasmic reticulum membrane. This chain is UDP-N-acetylglucosamine--dolichyl-phosphate N-acetylglucosaminephosphotransferase (DPAGT1), found in Cricetulus griseus (Chinese hamster).